Reading from the N-terminus, the 210-residue chain is MALELLTPFTKVELEEERKDKNRKQIGILGGNFNPVHNAHLLVADQVRQQLGLDEVLLMPEYKPPHVDKKATIDEKHRLKMLELAIKGIEGLAIETIELKRKGVSYTYDTMKDLIEQNPDVDYYFIIGADMVDYLPKWHKIDELIQMVQFVGVQRPKYKAGTSYPVIWVDVPLMDISSSMIRDFIRKNRKPNFLLPKLVLDYIEKEGLYQ.

The protein belongs to the NadD family.

The catalysed reaction is nicotinate beta-D-ribonucleotide + ATP + H(+) = deamido-NAD(+) + diphosphate. It participates in cofactor biosynthesis; NAD(+) biosynthesis; deamido-NAD(+) from nicotinate D-ribonucleotide: step 1/1. In terms of biological role, catalyzes the reversible adenylation of nicotinate mononucleotide (NaMN) to nicotinic acid adenine dinucleotide (NaAD). This chain is Probable nicotinate-nucleotide adenylyltransferase, found in Streptococcus mutans serotype c (strain ATCC 700610 / UA159).